The chain runs to 430 residues: Rho GTPase-activating protein 2 (430 aa).

Residues 1-36 form a disordered region; sequence MTGLVMMTKGGGCGGGGKGGRRKSTAEEEEEEEQNQ. A compositionally biased stretch (gly residues) spans 9–18; that stretch reads KGGGCGGGGK. The CRIB domain maps to 80 to 93; the sequence is IGWPTNVRHITHVT. A Rho-GAP domain is found at 125–310; sequence VSAESMQCSY…TLAEREENAT (186 aa). Residues 307 to 372 are disordered; that stretch reads ENATGSEGYS…HLSRHSTHED (66 aa). A compositionally biased stretch (low complexity) spans 316-326; it reads SPSHSSNSQTD. The span at 347-356 shows a compositional bias: acidic residues; sequence ECGEEEEVEE. The segment covering 357–371 has biased composition (basic and acidic residues); that stretch reads VEQHQEHLSRHSTHE.

Homodimerizes via its Rho-GAP domain and forms a tetrameric complex (2:2) with ARAC1/ROP3, ARAC2/ROP7, ARAC4/ROP2, ARAC5/ROP4, ARAC7/ROP9 or ARAC11/ROP1.

Acts as a GTPase activator for the Rac-type GTPase by converting it to an inactive GDP-bound state. This is Rho GTPase-activating protein 2 (ROPGAP2) from Arabidopsis thaliana (Mouse-ear cress).